The primary structure comprises 215 residues: UPF0502 protein YceH (215 aa).

N6-acetyllysine is present on K80.

It belongs to the UPF0502 family.

The sequence is that of UPF0502 protein YceH from Escherichia coli O7:K1 (strain IAI39 / ExPEC).